Consider the following 393-residue polypeptide: Protein TsgA (393 aa).

12 helical membrane-spanning segments follow: residues 11–31 (WISF…GMVM), 51–71 (FLNA…EIVP), 78–98 (FGFL…SLAL), 101–121 (TAMF…TFLI), 140–160 (FFSM…AHSI), 162–182 (WYWV…LTFG), 206–226 (IGVL…LGFI), 245–265 (TLVS…SFIL), 273–293 (ILTV…TGTP), 297–317 (AWSI…IITL), 332–352 (FVLT…GPIV), and 361–381 (LLTA…LGFV).

This sequence belongs to the major facilitator superfamily. TsgA family.

Its subcellular location is the cell inner membrane. The chain is Protein TsgA from Shigella boydii serotype 18 (strain CDC 3083-94 / BS512).